The following is a 714-amino-acid chain: P-loop NTPase domain-containing protein LPA1 (714 aa).

Residues 1–11 (MPMPPQCASSK) show a composition bias toward low complexity. Disordered stretches follow at residues 1–42 (MPMP…PPPK), 259–293 (QKLD…PRTE), and 595–689 (FGSE…GSGN). The span at 271 to 285 (EGRDDTSDDKAHHGS) shows a compositional bias: basic and acidic residues. Residues 595–617 (FGSEEDADDPPDAGTDEDLTDEE) show a composition bias toward acidic residues. Residues 618–636 (RDMHEIEAGSVDEHSTKSD) show a composition bias toward basic and acidic residues. Positions 659–670 (AASSTKNSSNQE) are enriched in polar residues.

In terms of tissue distribution, expressed in roots, leaf blade shoots, leaf sheath shoots and panicles.

Its function is as follows. Required for the accumulation of phytic acid in seeds. Phytic acid is the primary storage form of phosphorus in cereal grains and other plant seeds. This is P-loop NTPase domain-containing protein LPA1 from Oryza sativa subsp. japonica (Rice).